Consider the following 317-residue polypeptide: Acetyl-coenzyme A carboxylase carboxyl transferase subunit alpha (317 aa).

Residues 39–293 (RLETKAREAL…GDAIADALSQ (255 aa)) form the CoA carboxyltransferase C-terminal domain.

It belongs to the AccA family. In terms of assembly, acetyl-CoA carboxylase is a heterohexamer composed of biotin carboxyl carrier protein (AccB), biotin carboxylase (AccC) and two subunits each of ACCase subunit alpha (AccA) and ACCase subunit beta (AccD).

The protein resides in the cytoplasm. The catalysed reaction is N(6)-carboxybiotinyl-L-lysyl-[protein] + acetyl-CoA = N(6)-biotinyl-L-lysyl-[protein] + malonyl-CoA. Its pathway is lipid metabolism; malonyl-CoA biosynthesis; malonyl-CoA from acetyl-CoA: step 1/1. Its function is as follows. Component of the acetyl coenzyme A carboxylase (ACC) complex. First, biotin carboxylase catalyzes the carboxylation of biotin on its carrier protein (BCCP) and then the CO(2) group is transferred by the carboxyltransferase to acetyl-CoA to form malonyl-CoA. The polypeptide is Acetyl-coenzyme A carboxylase carboxyl transferase subunit alpha (Xanthobacter autotrophicus (strain ATCC BAA-1158 / Py2)).